A 551-amino-acid polypeptide reads, in one-letter code: Oleuropein beta-glucosidase (551 aa).

Residues 1–27 show a composition bias toward polar residues; the sequence is MDIQSNVLTITSGSTPTDTSSNGQAAK. The interval 1-33 is disordered; it reads MDIQSNVLTITSGSTPTDTSSNGQAAKSTKERI. A beta-D-glucoside contacts are provided by residues Gln-52, His-156, 201–202, Tyr-363, Glu-433, Trp-482, 489–490, and Phe-498; these read NE and EW. Glu-202 acts as the Proton donor in catalysis. Residue Glu-433 is the Nucleophile of the active site. The segment at 502 to 551 is required for the homomultimerization; that stretch reads YVDYANGRYTRLPKRSAVWWRNFLTKPTAVPLKNEPEKSEDRRKRLRGST. Positions 532-551 are disordered; that stretch reads PLKNEPEKSEDRRKRLRGST. Basic and acidic residues predominate over residues 535 to 544; sequence NEPEKSEDRR. The Nuclear localization signal signature appears at 542-550; sequence DRRKRLRGS.

It belongs to the glycosyl hydrolase 1 family. Homomultimer. Native form of the enzyme requires at least an octamer conformation. Expressed in expanding leaves and in young drupes, mostly in the developing seed coat tissues, the perisperm and the mesocarp. Also detected in shoot and root meristems, flower buds, developing ovaries and tapetal cells of the anther. Not detected in embryos or endosperm, or in leaf trichomes.

It localises to the nucleus. It catalyses the reaction oleuropein + H2O = oleuropein aglycone + D-glucose. Its function is as follows. Major beta-glucosidase activating oleuropein into a potent protein cross-linking agent. No activity with rutin, luteolin or p-nitrophenyl-beta-glucopyranoside as substrates. In Olea europaea (Common olive), this protein is Oleuropein beta-glucosidase.